We begin with the raw amino-acid sequence, 165 residues long: Type 3 secretion system regulator YopR (165 aa).

Belongs to the YopR family.

The protein localises to the secreted. May be involved in the regulation of the assembly of the type III secretion system (T3SS), also called injectisome, which is used to inject bacterial effector proteins into eukaryotic host cells. May control the secretion and/or polymerization of YscF/SctF, the principal component of the needle filament, thereby impacting the assembly of the T3SS. Involved in pathogenesis. This Yersinia pseudotuberculosis serotype I (strain IP32953) protein is Type 3 secretion system regulator YopR.